The chain runs to 427 residues: CCA-adding enzyme (427 aa).

Residues S50 and K53 each contribute to the ATP site. Residues S50 and K53 each coordinate CTP. Mg(2+) contacts are provided by D61, D63, and D112. ATP contacts are provided by H135, K155, and Y164. CTP is bound by residues H135, K155, and Y164.

It belongs to the tRNA nucleotidyltransferase/poly(A) polymerase family. Archaeal CCA-adding enzyme subfamily. Homodimer. Requires Mg(2+) as cofactor.

The enzyme catalyses a tRNA precursor + 2 CTP + ATP = a tRNA with a 3' CCA end + 3 diphosphate. It carries out the reaction a tRNA with a 3' CCA end + 2 CTP + ATP = a tRNA with a 3' CCACCA end + 3 diphosphate. Functionally, catalyzes the addition and repair of the essential 3'-terminal CCA sequence in tRNAs without using a nucleic acid template. Adds these three nucleotides in the order of C, C, and A to the tRNA nucleotide-73, using CTP and ATP as substrates and producing inorganic pyrophosphate. tRNA 3'-terminal CCA addition is required both for tRNA processing and repair. Also involved in tRNA surveillance by mediating tandem CCA addition to generate a CCACCA at the 3' terminus of unstable tRNAs. While stable tRNAs receive only 3'-terminal CCA, unstable tRNAs are marked with CCACCA and rapidly degraded. The protein is CCA-adding enzyme of Picrophilus torridus (strain ATCC 700027 / DSM 9790 / JCM 10055 / NBRC 100828 / KAW 2/3).